The primary structure comprises 442 residues: Type 3 secretion system ATPase (442 aa).

173 to 178 (GVGKST) lines the ATP pocket.

This sequence belongs to the ATPase alpha/beta chains family. T3SS ATPase subfamily. In terms of assembly, the core secretion machinery of the T3SS is composed of approximately 20 different proteins, including cytoplasmic components, a base, an export apparatus and a needle. This subunit is part of the cytosolic complex. Forms homohexamers.

Its subcellular location is the cytoplasm. It carries out the reaction ATP + H2O + cellular proteinSide 1 = ADP + phosphate + cellular proteinSide 2.. Its function is as follows. ATPase component of the type III secretion system (T3SS), also called injectisome, which is used to inject bacterial effector proteins into eukaryotic host cells. Acts as a molecular motor to provide the energy that is required for the export of proteins. Required for type III secretion apparatus (T3SA) formation, proper protein secretion, host cell invasion and virulence. May play a critical role in T3SS substrate recognition, disassembly of the effector/chaperone complex and unfolding of the effector in an ATP-dependent manner prior to secretion. The chain is Type 3 secretion system ATPase from Xanthomonas euvesicatoria.